The primary structure comprises 477 residues: Octopamine receptor (477 aa).

The Extracellular portion of the chain corresponds to 1-55 (MGQAATHVDANYTLINYTEEVIEDDRDACAVADDPKYPSSFGITLAVPEWEAICT). N-linked (GlcNAc...) asparagine glycans are attached at residues N11 and N16. Residues 56–78 (AIVLTLIIISTIVGNILVILSVF) form a helical membrane-spanning segment. Residues 79–88 (TYKPLRIVQN) lie on the Cytoplasmic side of the membrane. The chain crosses the membrane as a helical span at residues 89–110 (FFIVSLAVADLTVAILVLPLNV). The Extracellular portion of the chain corresponds to 111-127 (AYSILGQWVFGIYVCKM). A helical transmembrane segment spans residues 128-148 (WLTCDIMCCTSSILNLCAIAL). Topologically, residues 149–168 (DRYWAITDPINYAQKRTLER) are cytoplasmic. The helical transmembrane segment at 169 to 191 (VLLMIGVVWVLSLIISSPPLLGW) threads the bilayer. The Extracellular portion of the chain corresponds to 192–216 (NDWPDVFEPDTPCRLTSQPGFVIFS). Residues 217 to 238 (SSGSFYIPLVIMTVVYFEIYLA) form a helical membrane-spanning segment. Residues 239–405 (TKKRLRDRAK…LTRERRAART (167 aa)) lie on the Cytoplasmic side of the membrane. Disordered stretches follow at residues 256 to 317 (SSGQ…SKDD) and 334 to 358 (VTDM…THED). Basic and acidic residues-rich tracts occupy residues 263–272 (NNKDDHHDQD) and 279–295 (NHNE…DNEK). Residues 296-312 (KKRTRKLTPKKKPKRKY) show a composition bias toward basic residues. The chain crosses the membrane as a helical span at residues 406–427 (LGIIMGVFVVCWLPFFVIYLVI). At 428–439 (PFCASCCLSNKF) the chain is on the extracellular side. Residues 440–460 (INFITWLGYCNSALNPLIYTI) traverse the membrane as a helical segment. Over 461–477 (FNMDFRRAFKKLLCMKP) the chain is Cytoplasmic.

The protein belongs to the G-protein coupled receptor 1 family.

It is found in the cell membrane. Its function is as follows. Receptor for octopamine. Octopamine (OA) is a neurotransmitter, neurohormone, and neuromodulator in invertebrates. The activity of this receptor is mediated by G proteins which activate adenylyl cyclase. This chain is Octopamine receptor, found in Heliothis virescens (Tobacco budworm moth).